Reading from the N-terminus, the 589-residue chain is RNA-directed RNA polymerase subunit beta (589 aa).

The region spanning 259–391 (RRAHEGSVTN…TNTKKTFSEG (133 aa)) is the RdRp catalytic domain. The Mg(2+) site is built by Asp274, Asp359, and Asp360.

In terms of assembly, homodimer; the replicase complex can dimerize. Part of the viral RNA-dependent RNA polymerase complex, the other subunits are the host ribosomal protein S1, EF-Tu and EF-Ts. S1 is needed for the initiation of genomic RNA (+)-strand replication. Requires Mg(2+) as cofactor.

The enzyme catalyses RNA(n) + a ribonucleoside 5'-triphosphate = RNA(n+1) + diphosphate. In terms of biological role, this is the catalytic subunit of the viral RNA-dependent RNA polymerase complex. This complex is involved in viral RNA replication that produces (+)-stranded genomes via a complementary, (-)-stranded intermediate. Binds RNA cooperatively with the host ribosomal protein S1. This is RNA-directed RNA polymerase subunit beta from Escherichia coli (Bacteriophage Q-beta).